A 522-amino-acid polypeptide reads, in one-letter code: MTIRKSNPYLSLVNSYLMDSPQPSSMNYWWNVGSLLGLCLVMQMASGMFLAMHYSSSMELAFNSVEHMMRDVNAGWLMRYIHANGASFFFMCLYLHMGKALYYGSYKSPRVLVWSMGVMMFMLTMATAFMGYCLVYGQMSHWGATVITNLLSAMPFMGGDLVPLSIILSLYLLYISLKTFMKMIFNQSYMCPAKGWVKKVLDNTFCIKKYMHMYLSSRTSPXLYINTMSNMQHMKIMSTKSHTKDRDTSFLEKDIKNMDRNLLALMVGFMDGDGYIRMNKKSKDNMNYIYMSLIMNLNKNDLKLLQYFHQQLNMGKVYNMTPKKGNKLARWEMNKLDLFNKMEPLLEYHNMKFLTETRQKQYLLLKYIKHNKLVYYEDIINNNNYINEFIENNTLMDNFIKLDYFNNWLVGFTMAEGSFLIKKNKDICFQLKQKYNLELFNNMTLFFNTTRKLNINKNKYMQFNVSSKNDIQNMINFFSFSNNQPLLGNKLISYNKWLFTIKNSMRYKELKTPYMSWHQKEQ.

Over 1–31 (MTIRKSNPYLSLVNSYLMDSPQPSSMNYWWN) the chain is Mitochondrial matrix. A cytochrome b region spans residues 1 to 163 (MTIRKSNPYL…MPFMGGDLVP (163 aa)). Residues 32-52 (VGSLLGLCLVMQMASGMFLAM) traverse the membrane as a helical segment. Residues 53 to 84 (HYSSSMELAFNSVEHMMRDVNAGWLMRYIHAN) are Mitochondrial intermembrane-facing. A helical transmembrane segment spans residues 85 to 105 (GASFFFMCLYLHMGKALYYGS). Residues 106–110 (YKSPR) are Mitochondrial matrix-facing. Residues 111–131 (VLVWSMGVMMFMLTMATAFMG) traverse the membrane as a helical segment. At 132–154 (YCLVYGQMSHWGATVITNLLSAM) the chain is on the mitochondrial intermembrane side. Residues 155-175 (PFMGGDLVPLSIILSLYLLYI) traverse the membrane as a helical segment. A maturase region spans residues 164-522 (LSIILSLYLL…PYMSWHQKEQ (359 aa)). The Mitochondrial matrix segment spans residues 176–522 (SLKTFMKMIF…PYMSWHQKEQ (347 aa)).

The protein in the N-terminal section; belongs to the cytochrome b family. In the C-terminal section; belongs to the LAGLIDADG endonuclease family.

The protein localises to the mitochondrion inner membrane. Mitochondrial mRNA maturase required for splicing of intron 3 of the cytochrome b (COB) gene, containing its own coding sequence. The chain is Cytochrome b mRNA maturase bI3 (bI3) from Debaryomyces hansenii (strain ATCC 36239 / CBS 767 / BCRC 21394 / JCM 1990 / NBRC 0083 / IGC 2968) (Yeast).